A 490-amino-acid polypeptide reads, in one-letter code: UDP-glycosyltransferase 86A1 (490 aa).

UDP-alpha-D-glucose is bound by residues S294, 352–354 (CCQ), 369–377 (HCGWNSILE), and 391–394 (LTDQ).

This sequence belongs to the UDP-glycosyltransferase family.

In Arabidopsis thaliana (Mouse-ear cress), this protein is UDP-glycosyltransferase 86A1 (UGT86A1).